An 838-amino-acid polypeptide reads, in one-letter code: Protein P (838 aa).

The terminal protein domain (TP) stretch occupies residues 1–177; that stretch reads MPLSYQHFRK…FCGSPYSWEQ (177 aa). The spacer stretch occupies residues 178–341; the sequence is ELQHQTSTRH…YCLTHIVNLL (164 aa). Disordered regions lie at residues 215–238 and 285–311; these read QSRL…SGSI and STSK…RSQS. The segment covering 285 to 294 has biased composition (polar residues); the sequence is STSKRQSSSG. The tract at residues 342–685 is polymerase/reverse transcriptase domain (RT); it reads EDWGPCTEHG…YLHLYPVARQ (344 aa). One can recognise a Reverse transcriptase domain in the interval 352–595; sequence EHNIRIPRTP…YSLNFMGYVI (244 aa). Mg(2+) contacts are provided by aspartate 424, aspartate 546, and aspartate 547.

The protein belongs to the hepadnaviridae P protein family.

The enzyme catalyses DNA(n) + a 2'-deoxyribonucleoside 5'-triphosphate = DNA(n+1) + diphosphate. The catalysed reaction is Endonucleolytic cleavage to 5'-phosphomonoester.. Activated by host HSP70 and HSP40 in vitro to be able to bind the epsilon loop of the pgRNA. Because deletion of the RNase H region renders the protein partly chaperone-independent, the chaperones may be needed indirectly to relieve occlusion of the RNA-binding site by this domain. Inhibited by several reverse-transcriptase inhibitors: Lamivudine, Adefovir and Entecavir. Functionally, multifunctional enzyme that converts the viral RNA genome into dsDNA in viral cytoplasmic capsids. This enzyme displays a DNA polymerase activity that can copy either DNA or RNA templates, and a ribonuclease H (RNase H) activity that cleaves the RNA strand of RNA-DNA heteroduplexes in a partially processive 3'- to 5'-endonucleasic mode. Neo-synthesized pregenomic RNA (pgRNA) are encapsidated together with the P protein, and reverse-transcribed inside the nucleocapsid. Initiation of reverse-transcription occurs first by binding the epsilon loop on the pgRNA genome, and is initiated by protein priming, thereby the 5'-end of (-)DNA is covalently linked to P protein. Partial (+)DNA is synthesized from the (-)DNA template and generates the relaxed circular DNA (RC-DNA) genome. After budding and infection, the RC-DNA migrates in the nucleus, and is converted into a plasmid-like covalently closed circular DNA (cccDNA). The activity of P protein does not seem to be necessary for cccDNA generation, and is presumably released from (+)DNA by host nuclear DNA repair machinery. This is Protein P from Homo sapiens (Human).